A 488-amino-acid polypeptide reads, in one-letter code: Photosystem II CP43 reaction center protein (488 aa).

A propeptide spanning residues 1 to 29 (MTKVFALGWLLKINLMKTLYSLRRFYHVE) is cleaved from the precursor. The next 5 helical transmembrane spans lie at 84–108 (LFEV…PHLA), 149–170 (LIGP…RDKN), 193–215 (KALF…RFVS), 270–290 (KPFA…LSYS), and 306–327 (WYNN…ASQA). [CaMn4O5] cluster is bound at residue Glu382. The chain crosses the membrane as a helical span at residues 462 to 486 (RARAAAAGFEKGINRENEPVLSMRP).

It belongs to the PsbB/PsbC family. PsbC subfamily. PSII is composed of 1 copy each of membrane proteins PsbA, PsbB, PsbC, PsbD, PsbE, PsbF, PsbH, PsbI, PsbJ, PsbK, PsbL, PsbM, PsbT, PsbX, PsbY, PsbZ, Psb30/Ycf12, at least 3 peripheral proteins of the oxygen-evolving complex and a large number of cofactors. It forms dimeric complexes. The cofactor is Binds multiple chlorophylls and provides some of the ligands for the Ca-4Mn-5O cluster of the oxygen-evolving complex. It may also provide a ligand for a Cl- that is required for oxygen evolution. PSII binds additional chlorophylls, carotenoids and specific lipids..

Its subcellular location is the plastid. It is found in the chloroplast thylakoid membrane. One of the components of the core complex of photosystem II (PSII). It binds chlorophyll and helps catalyze the primary light-induced photochemical processes of PSII. PSII is a light-driven water:plastoquinone oxidoreductase, using light energy to abstract electrons from H(2)O, generating O(2) and a proton gradient subsequently used for ATP formation. This chain is Photosystem II CP43 reaction center protein, found in Pyropia yezoensis (Susabi-nori).